A 575-amino-acid polypeptide reads, in one-letter code: MSGNSEGLLESSGGGVGGSVEEEKDMKMEETGEGAGSGGNRWPRPETLALLRIRSEMDKAFRDSTLKAPLWEEISRKMMELGYKRSSKKCKEKFENVYKYHKRTKEGRTGKSEGKTYRFFEELEAFETLSSYQPEPESQPAKSSAVITNAPATSSLIPWISSSNPSTEKSSSPLKHHHQVSVQPITTNPTFLAKQPSSTTPFPFYSSNNTTTVSQPPISNDLMNNVSSLNLFSSSTSSSTASDEEEDHHQVKSSRKKRKYWKGLFTKLTKELMEKQEKMQKRFLETLEYREKERISREEAWRVQEIGRINREHETLIHERSNAAAKDAAIISFLHKISGGQPQQPQQHNHKPSQRKQYQSDHSITFESKEPRAVLLDTTIKMGNYDNNHSVSPSSSRWPKTEVEALIRIRKNLEANYQENGTKGPLWEEISAGMRRLGYNRSAKRCKEKWENINKYFKKVKESNKKRPLDSKTCPYFHQLEALYNERNKSGAMPLPLPLMVTPQRQLLLSQETQTEFETDQREKVGDKEDEEEGESEEDEYDEEEEGEGDNETSEFEIVLNKTSSPMDINNNLFT.

Low complexity predominate over residues 1-11 (MSGNSEGLLES). 4 disordered regions span residues 1–44 (MSGN…RWPR), 157–181 (IPWI…HQVS), 232–256 (FSSS…SSRK), and 339–364 (GGQP…DHSI). Positions 40 to 98 (NRWPRPETLALLRIRSEMDKAFRDSTLKAPLWEEISRKMMELGYKRSSKKCKEKFENVY) constitute a Myb-like 1 domain. Composition is skewed to low complexity over residues 161-172 (SSSNPSTEKSSS) and 232-241 (FSSSTSSSTA). The segment covering 355–364 (RKQYQSDHSI) has biased composition (polar residues). Residues 390–454 (SVSPSSSRWP…RCKEKWENIN (65 aa)) enclose the Myb-like 2 domain. Positions 513–575 (TQTEFETDQR…PMDINNNLFT (63 aa)) are disordered. Over residues 528–555 (KEDEEEGESEEDEYDEEEEGEGDNETSE) the composition is skewed to acidic residues. Over residues 561–575 (NKTSSPMDINNNLFT) the composition is skewed to polar residues.

Its subcellular location is the nucleus. Functionally, probable transcription factor that binds specific DNA sequence. The sequence is that of Trihelix transcription factor GT-2 (GT-2) from Arabidopsis thaliana (Mouse-ear cress).